A 270-amino-acid polypeptide reads, in one-letter code: Large ribosomal subunit protein uL10 (270 aa).

The segment at 234 to 270 is disordered; that stretch reads VTELEAGKTRPKREGNRRQAMNGDEMDEDQSSDEDSD. The span at 238 to 250 shows a compositional bias: basic and acidic residues; sequence EAGKTRPKREGNR. Residues 257 to 270 are compositionally biased toward acidic residues; the sequence is DEMDEDQSSDEDSD.

Belongs to the universal ribosomal protein uL10 family. In terms of assembly, associates with the pre-60S ribosomal particle.

Its subcellular location is the nucleus. The protein resides in the nucleolus. It localises to the cytoplasm. In terms of biological role, component of the ribosome assembly machinery. Nuclear paralog of the ribosomal protein P0, it binds pre-60S subunits at an early stage of assembly in the nucleolus, and is replaced by P0 in cytoplasmic pre-60S subunits and mature 80S ribosomes. The polypeptide is Large ribosomal subunit protein uL10 (Chaetomium thermophilum (strain DSM 1495 / CBS 144.50 / IMI 039719) (Thermochaetoides thermophila)).